A 3329-amino-acid polypeptide reads, in one-letter code: MPVEYKRRPTFWEIFKARCSTADLGPISLNWFEELSSEAPPYNSEPPEESEYKPHGYEPQLFKTPQRNPPYHQFASTPIMFKERSQTLPLDQSPFRELGKVVASSKHKTHSKKKTKVDPVVDVASPPLKSCLSESPLTLRCTQAVLQREKPVVSGSLFYTPKLKEGQTPKPISESLGVEVDPDMSWTSSLATPPTLSSTVLIARDEEARSSVTPADSPATLKSCFSNHNESPQKNDRSVPSVIDSENKNQQEAFSQGLGKMLGDSSGKRNSFKDCLRKPIPNILEDGETAVDTSEEDSFSLCFPKRRTRNLQKMRMGKTRKKIFSETRTDELSEEARRQTDDKNSFVFEMELRESDPLDPGVTSQKPFYSQNEEICNEAVQCSDSRWSQSNLSGLNETQTGKITLPHISSHSQNISEDFIDMKKEGTGSITSEKSLPHISSLPEPEKMFSEETVVDKEHEGQHFESLEDSIAGKQMVSRTSQAACLSPSIRKSIFKMREPLDETLGTVFSDSMTNSTFTEEHEASACGLGILTACSQREDSICPSSVDTGSWPTTLTDTSATVKNAGLISTLKNKKRKFIYSVSDDASLQGKKLQTHRQLELTNLSAQLEASAFEVPLTFTNVNSGIPDSSDKKRCLPNDPEEPSLTNSFGTATSKEISYIHALISQDLNDKEAIVIEEKPQPYTAREADFLLCLPERTCENDQKSPKVSNGKEKVLVSACLPSAVQLSSISFESQENPLGDHNGTSTLKLTPSSKLPLSKADMVSREKMCKMPEKLQCESCKVNIELSKNILEVNEICILSENSKTPGLLPPGENIIEVASSMKSQFNQNAKIVIQKDQKGSPFISEVAVNMNSEELFPDSGNNFAFQVTNKCNKPDLGSSVELQEEDLSHTQGPSLKNSPMAVDEDVDDAHAAQVLITKDSDSLAVVHDYTEKSRNNIEQHQKGTEDKDFKSNSSLNMKSDGNSDCSDKWSEFLDPVLNHNFGGSFRTASNKEIKLSEHNVKKSKMFFKDIEEQYPTRLACIDIVNTLPLANQKKLSEPHIFDLKSVTTVSTQSHNQSSVSHEDTDTAPQMLSSKQDFHSNNLTTSQKAEITELSTILEESGSQFEFTQFRKPSHIAQNTSEVPGNQMVVLSTASKEWKDTDLHLPVDPSVGQTDHSKQFEGSAGVKQSFPHLLEDTCNKNTSCFLPNINEMEFGGFCSALGTKLSVSNEALRKAMKLFSDIENSEEPSAKVGPRGFSSSAHHDSVASVFKIKKQNTEKSFDEKSSKCQVTLQNNIEMTTCIFVGRNPEKYIKNTKHEDSYTSSQRNNLENSDGSMSSTSGPVYIHKGDSDLPADQGSKCPESCTQYAREENTQIKENISDLTCLEIMKAEETCMKSSDKKQLPSDKMEQNIKEFNISFQTASGKNTRVSKESLNKSVNIFNRETDELTVISDSLNSKILHGINKDKMHTSCHKKAISIKKVFEDHFPIVTVSQLPAQQHPEYEIESTKEPTLLSFHTASGKKVKIMQESLDKVKNLFDETQYVRKTASFSQGSKPLKDSKKELTLAYEKIEVTASKCEEMQNFVSKETEMLPQQNYHMYRQTENLKTSNGTSSKVQENIENNVEKNPRICCICQSSYPVTEDSALAYYTEDSRKTCVRESSLSKGRKWLREQGDKLGTRNTIKIECVKEHTEDFAGNASYEHSLVIIRTEIDTNHVSENQVSTLLSDPNVCHSYLSQSSFCHCDDMHNDSGYFLKNKIDSDVPPDMKNAEGNTISPRVSATKERNLHPQTINEYCVQKLETNTSPHANKDVAIDPSLLDSRNCKVGSLVFITAHSQETERTKEIVTDNCYKIVEQNRQSKPDTCQTSCHKVLDDSKDFICPSSSGDVCINSRKDSFCPHNEQILQHNQSMSGLKKAATPPVGLETWDTSKSIREPPQAAHPSRTYGIFSTASGKAIQVSDASLEKARQVFSEMDGDAKQLSSMVSLEGNEKPHHSVKRENSVVHSTQGVLSLPKPLPGNVNSSVFSGFSTAGGKLVTVSESALHKVKGMLEEFDLIRTEHTLQHSPIPEDVSKILPQPCAEIRTPEYPVNSKLQKTYNDKSSLPSNYKESGSSGNTQSIEVSLQLSQMERNQDTQLVLGTKVSHSKANLLGKEQTLPQNIKVKTDEMKTFSDVPVKTNVGEYYSKESENYFETEAVESAKAFMEDDELTDSEQTHAKCSLFTCPQNETLFNSRTRKRGGVTVDAVGQPPIKRSLLNEFDRIIESKGKSLTPSKSTPDGTVKDRSLFTHHMSLEPVTCGPFCSSKERQGAQRPHLTSPAQELLSKGHPWRHSALEKSPSSPIVSILPAHDVSATRTERTRHSGKSTKVFVPPFKMKSQFHGDEHFNSKNVNLEGKNQKSTDGDREDGNDSHVRQFNKDLMSSLQSARDLQDMRIKNKERRHLRLQPGSLYLTKSSTLPRISLQAAVGDRAPSACSPKQLYIYGVSKECINVNSKNAEYFQFDIQDHFGKEDLCAGKGFQLADGGWLIPSNDGKAGKEEFYRALCDTPGVDPKLISSIWVANHYRWIVWKLAAMEFAFPKEFANRCLNPERVLLQLKYRYDVEIDNSRRSALKKILERDDTAAKTLVLCISDIISPSTKVSETSGGKTSGEDANKVDTIELTDGWYAVRAQLDPPLMALVKSGKLTVGQKIITQGAELVGSPDACAPLEAPDSLRLKISANSTRPARWHSRLGFFRDPRPFPLPLSSLFSDGGNVGCVDIIVQRVYPLQWVEKTVSGLYIFRSEREEEKEALRFAEAQQKKLEALFTKVHTEFKDHEEDTTQRCVLSRTLTRQQVHALQDGAELYAAVQYASDPDHLEACFSEEQLRALNNYRQMLNDKKQARIQSEFRKALESAEKEEGLSRDVTTVWKLRVTSYKKKEKSALLSIWRPSSDLSSLLTEGKRYRIYHLAVSKSKSKFERPSIQLTATKRTQYQQLPVSSETLLQVYQPRESLHFSRLSDPAFQPPCSEVDVVGVVVSVVKPIGLAPLVYLSDECLNLLVVKFGIDLNEDIKPRVLIAASNLQCQPESTSGVPTLFAGHFSIFSASPKEAYFQEKVNNLKHAIENIDTFYKEAEKKLIHVLEGDSPKWSTPNKDPTREPHAASTCCASDLLGSGGQFLRISPTGQQSYQSPLSHCTLKGKSMPLAHSAQMAAKSWSGENEIDDPKTCRKRRALDFLSRLPLPSPVSPICTFVSPAAQKAFQPPRSCGTKYATPIKKEPSSPRRRTPFQKTSGVSLPDCDSVADEELALLSTQALTPDSVGGNEQAFPGDSTRNPQPAQRPDQQVGPRSRKESLRDCRGDSSEKLAVES.

An interaction with PALB2 region spans residues 1 to 40 (MPVEYKRRPTFWEIFKARCSTADLGPISLNWFEELSSEAP). Disordered stretches follow at residues 37–69 (SEAPPYNSEPPEESEYKPHGYEPQLFKTPQRNP) and 207–241 (EARSSVTPADSPATLKSCFSNHNESPQKNDRSVPS). 2 positions are modified to phosphoserine: serine 435 and serine 481. Positions 628-650 (PDSSDKKRCLPNDPEEPSLTNSF) are disordered. Residues 628 to 979 (PDSSDKKRCL…DKWSEFLDPV (352 aa)) form an interaction with NPM1 region. Residue serine 735 is modified to Phosphoserine. Basic and acidic residues predominate over residues 934–953 (EKSRNNIEQHQKGTEDKDFK). Residues 934-965 (EKSRNNIEQHQKGTEDKDFKSNSSLNMKSDGN) form a disordered region. Polar residues predominate over residues 954–965 (SNSSLNMKSDGN). BRCA2 repeat units follow at residues 981–1015 (NHNFGGSFRTASNKEIKLSEHNVKKSKMFFKDIEE) and 1192–1226 (NEMEFGGFCSALGTKLSVSNEALRKAMKLFSDIEN). The tract at residues 982–2035 (HNFGGSFRTA…LHKVKGMLEE (1054 aa)) is interaction with RAD51. The disordered stretch occupies residues 1296–1340 (NTKHEDSYTSSQRNNLENSDGSMSSTSGPVYIHKGDSDLPADQGS). Positions 1303–1323 (YTSSQRNNLENSDGSMSSTSG) are enriched in polar residues. BRCA2 repeat units lie at residues 1394–1428 (IKEFNISFQTASGKNTRVSKESLNKSVNIFNRETD), 1491–1525 (KEPTLLSFHTASGKKVKIMQESLDKVKNLFDETQY), 1623–1657 (TEDSALAYYTEDSRKTCVRESSLSKGRKWLREQGD), 1924–1958 (PSRTYGIFSTASGKAIQVSDASLEKARQVFSEMDG), and 2004–2038 (NSSVFSGFSTAGGKLVTVSESALHKVKGMLEEFDL). Position 2048 is a phosphoserine (serine 2048). The disordered stretch occupies residues 2073-2099 (NSKLQKTYNDKSSLPSNYKESGSSGNT). A compositionally biased stretch (polar residues) spans 2074-2099 (SKLQKTYNDKSSLPSNYKESGSSGNT). The interval 2219 to 2285 (KRGGVTVDAV…EPVTCGPFCS (67 aa)) is interaction with HSF2BP. The interaction with FANCD2 stretch occupies residues 2298–2466 (TSPAQELLSK…SPKQLYIYGV (169 aa)). A disordered region spans residues 2361 to 2393 (FHGDEHFNSKNVNLEGKNQKSTDGDREDGNDSH). Residues 2377–2393 (KNQKSTDGDREDGNDSH) are compositionally biased toward basic and acidic residues. The interaction with SEM1 stretch occupies residues 2402–2753 (MSSLQSARDL…QRVYPLQWVE (352 aa)). The Nuclear export signal; masked by interaction with SEM1 signature appears at 2603-2619 (AAKTLVLCISDIISPST). Serine 3214 carries the phosphoserine; by CDK1 and CDK2 modification. Disordered regions lie at residues 3221-3257 (FQPPRSCGTKYATPIKKEPSSPRRRTPFQKTSGVSLP) and 3273-3329 (QALT…AVES). Position 3241 is a phosphoserine (serine 3241). Over residues 3309 to 3329 (SRKESLRDCRGDSSEKLAVES) the composition is skewed to basic and acidic residues.

In terms of assembly, monomer and dimer. Interacts with RAD51; regulates RAD51 recruitment and function at sites of DNA repair. Interacts with SEM1, WDR16, USP11, DMC1, ROCK2 and NPM1. Interacts with both nonubiquitinated and monoubiquitinated FANCD2; this complex also includes XRCC3 and phosphorylated FANCG. Part of a BRCA complex containing BRCA1, BRCA2 and PALB2. Component of the homologous recombination repair (HR) complex composed of ERCC5/XPG, BRCA2, PALB2, DSS1 and RAD51. Within the complex, interacts with ERCC5/XPG and PALB2. Interacts directly with PALB2 which may serve as a scaffold for a HR complex containing PALB2, BRCA2, RAD51C, RAD51 and XRCC3. Interacts with BRCA1 only in the presence of PALB2 which serves as the bridging protein. Interacts with POLH; the interaction is direct. Interacts with the TREX-2 complex subunits PCID2 and SEM1. Interacts with HSF2BP and BRME1; the interaction with HSF2BP is direct and allows the formation of a ternary complex. The complex BRME1:HSF2BP:BRCA2 interacts with SPATA22, MEIOB and RAD51. Post-translationally, phosphorylated by ATM upon irradiation-induced DNA damage. Phosphorylation by CHEK1 and CHEK2 regulates interaction with RAD51. Phosphorylation at Ser-3291 by CDK1 and CDK2 is low in S phase when recombination is active, but increases as cells progress towards mitosis; this phosphorylation prevents homologous recombination-dependent repair during S phase and G2 by inhibiting RAD51 binding. Ubiquitinated in the absence of DNA damage; this does not lead to proteasomal degradation. In contrast, ubiquitination in response to DNA damage leads to proteasomal degradation. As to expression, widely expressed. Highest expression in cerebellum, testis, ileum, appendix, epididymis, ovary and mammary gland. No expression in lung.

Its subcellular location is the nucleus. It localises to the cytoplasm. The protein resides in the cytoskeleton. It is found in the microtubule organizing center. The protein localises to the centrosome. Involved in double-strand break repair and/or homologous recombination. Binds RAD51 and potentiates recombinational DNA repair by promoting assembly of RAD51 onto single-stranded DNA (ssDNA). Acts by targeting RAD51 to ssDNA over double-stranded DNA, enabling RAD51 to displace replication protein-A (RPA) from ssDNA and stabilizing RAD51-ssDNA filaments by blocking ATP hydrolysis. Part of a PALB2-scaffolded HR complex containing RAD51C and which is thought to play a role in DNA repair by HR. May participate in S phase checkpoint activation. Binds selectively to ssDNA, and to ssDNA in tailed duplexes and replication fork structures. May play a role in the extension step after strand invasion at replication-dependent DNA double-strand breaks; together with PALB2 is involved in both POLH localization at collapsed replication forks and DNA polymerization activity. In concert with NPM1, regulates centrosome duplication. Interacts with the TREX-2 complex (transcription and export complex 2) subunits PCID2 and SEM1, and is required to prevent R-loop-associated DNA damage and thus transcription-associated genomic instability, independently of its known role in homologous recombination. This chain is Breast cancer type 2 susceptibility protein homolog, found in Mus musculus (Mouse).